Consider the following 387-residue polypeptide: Solute carrier family 25 protein Shawn (387 aa).

3 Solcar repeats span residues isoleucine 37 to arginine 156, isoleucine 179 to serine 263, and proline 269 to phenylalanine 366. Transmembrane regions (helical) follow at residues valine 43 to isoleucine 63, leucine 128 to valine 148, isoleucine 179 to valine 199, leucine 235 to threonine 255, phenylalanine 275 to valine 295, and alanine 337 to isoleucine 357.

The protein belongs to the mitochondrial carrier (TC 2.A.29) family.

The protein resides in the mitochondrion inner membrane. Its function is as follows. Mitochondrial transporter required for glutathione import into mitochondria. The chain is Solute carrier family 25 protein Shawn from Drosophila melanogaster (Fruit fly).